The chain runs to 469 residues: Ribosomal protein uS12 methylthiotransferase RimO (469 aa).

One can recognise an MTTase N-terminal domain in the interval 17 to 132 (PRVGFVSLGC…VMDAVHLNLP (116 aa)). The [4Fe-4S] cluster site is built by cysteine 26, cysteine 62, cysteine 91, cysteine 167, cysteine 171, and cysteine 174. The Radical SAM core domain occupies 153-395 (LTPKHYAYLK…AVAEEVSSLK (243 aa)). The region spanning 397–469 (QQRVGATMQV…QGHDLVAIPV (73 aa)) is the TRAM domain.

The protein belongs to the methylthiotransferase family. RimO subfamily. The cofactor is [4Fe-4S] cluster.

The protein localises to the cytoplasm. The catalysed reaction is L-aspartate(89)-[ribosomal protein uS12]-hydrogen + (sulfur carrier)-SH + AH2 + 2 S-adenosyl-L-methionine = 3-methylsulfanyl-L-aspartate(89)-[ribosomal protein uS12]-hydrogen + (sulfur carrier)-H + 5'-deoxyadenosine + L-methionine + A + S-adenosyl-L-homocysteine + 2 H(+). In terms of biological role, catalyzes the methylthiolation of an aspartic acid residue of ribosomal protein uS12. In Polaromonas sp. (strain JS666 / ATCC BAA-500), this protein is Ribosomal protein uS12 methylthiotransferase RimO.